A 92-amino-acid polypeptide reads, in one-letter code: Sperm-specific protein Phi-1 (92 aa).

The interval 1-92 (MPSPTRRSSK…RVRAKKKKKK (92 aa)) is disordered. Basic residues-rich tracts occupy residues 7–19 (RSSKSRSKSRSRS) and 29–92 (AAKR…KKKK).

As to expression, sperm.

The protein resides in the nucleus. It localises to the chromosome. Involved in nuclear basic protein transition: histones are replaced by spermatid specific proteins which are themselves replaced by protamines in late spermatids. This is Sperm-specific protein Phi-1 from Mytilus edulis (Blue mussel).